The primary structure comprises 413 residues: Histidine--tRNA ligase (413 aa).

The protein belongs to the class-II aminoacyl-tRNA synthetase family. In terms of assembly, homodimer.

It is found in the cytoplasm. It catalyses the reaction tRNA(His) + L-histidine + ATP = L-histidyl-tRNA(His) + AMP + diphosphate + H(+). This chain is Histidine--tRNA ligase, found in Fusobacterium nucleatum subsp. nucleatum (strain ATCC 25586 / DSM 15643 / BCRC 10681 / CIP 101130 / JCM 8532 / KCTC 2640 / LMG 13131 / VPI 4355).